The sequence spans 157 residues: Small ribosomal subunit protein uS7 (157 aa).

It belongs to the universal ribosomal protein uS7 family. Part of the 30S ribosomal subunit. Contacts proteins S9 and S11.

Functionally, one of the primary rRNA binding proteins, it binds directly to 16S rRNA where it nucleates assembly of the head domain of the 30S subunit. Is located at the subunit interface close to the decoding center, probably blocks exit of the E-site tRNA. This Herpetosiphon aurantiacus (strain ATCC 23779 / DSM 785 / 114-95) protein is Small ribosomal subunit protein uS7.